A 267-amino-acid chain; its full sequence is 2-keto-3-deoxy-L-rhamnonate aldolase (267 aa).

His-49 functions as the Proton acceptor in the catalytic mechanism. Gln-151 is a substrate binding site. Glu-153 serves as a coordination point for Mg(2+). Positions 178 and 179 each coordinate substrate. A Mg(2+)-binding site is contributed by Asp-179.

This sequence belongs to the HpcH/HpaI aldolase family. KDR aldolase subfamily. In terms of assembly, homohexamer. Mg(2+) is required as a cofactor.

The catalysed reaction is 2-dehydro-3-deoxy-L-rhamnonate = (S)-lactaldehyde + pyruvate. Catalyzes the reversible retro-aldol cleavage of 2-keto-3-deoxy-L-rhamnonate (KDR) to pyruvate and lactaldehyde. This Escherichia coli O157:H7 protein is 2-keto-3-deoxy-L-rhamnonate aldolase.